The chain runs to 239 residues: Serine protease SplC (239 aa).

The N-terminal stretch at 1–36 is a signal peptide; sequence MNKNIVIKSMAALAILTSVTGINAAVVEETQQIANA. Residues histidine 75, aspartate 113, and serine 193 each act as charge relay system in the active site.

This sequence belongs to the peptidase S1B family.

The protein localises to the secreted. The protein is Serine protease SplC (splC) of Staphylococcus aureus (strain USA300 / TCH1516).